A 203-amino-acid chain; its full sequence is Small ribosomal subunit protein uS7B (203 aa).

The protein belongs to the universal ribosomal protein uS7 family. Component of the small ribosomal subunit (SSU). Mature yeast ribosomes consist of a small (40S) and a large (60S) subunit. The 40S small subunit contains 1 molecule of ribosomal RNA (18S rRNA) and at least 33 different proteins. The large 60S subunit contains 3 rRNA molecules (25S, 5.8S and 5S rRNA) and at least 46 different proteins.

The protein resides in the cytoplasm. Functionally, component of the ribosome, a large ribonucleoprotein complex responsible for the synthesis of proteins in the cell. The small ribosomal subunit (SSU) binds messenger RNAs (mRNAs) and translates the encoded message by selecting cognate aminoacyl-transfer RNA (tRNA) molecules. The large subunit (LSU) contains the ribosomal catalytic site termed the peptidyl transferase center (PTC), which catalyzes the formation of peptide bonds, thereby polymerizing the amino acids delivered by tRNAs into a polypeptide chain. The nascent polypeptides leave the ribosome through a tunnel in the LSU and interact with protein factors that function in enzymatic processing, targeting, and the membrane insertion of nascent chains at the exit of the ribosomal tunnel. The protein is Small ribosomal subunit protein uS7B (rps502) of Schizosaccharomyces pombe (strain 972 / ATCC 24843) (Fission yeast).